A 124-amino-acid chain; its full sequence is Small ribosomal subunit protein uS10z/uS10x (124 aa).

Belongs to the universal ribosomal protein uS10 family.

The chain is Small ribosomal subunit protein uS10z/uS10x (RPS20A) from Arabidopsis thaliana (Mouse-ear cress).